Here is a 695-residue protein sequence, read N- to C-terminus: DNA topoisomerase 4 subunit B (695 aa).

The tract at residues 1–53 (MSSSDKIPSLFGDDDALAPVPAAPFKASVEPRVEPTPRPIPPPPPSKTASAPG) is disordered. The segment covering 36–46 (TPRPIPPPPPS) has biased composition (pro residues). ATP is bound by residues Tyr-55, Asn-95, Asp-122, 164–170 (GLHGVGA), and Lys-397. The Toprim domain maps to 477–591 (AELFIVEGDS…GGHLFLALPP (115 aa)). Residues Glu-483, Asp-556, and Asp-558 each contribute to the Mg(2+) site.

It belongs to the type II topoisomerase family. ParE type 1 subfamily. Heterotetramer composed of ParC and ParE. Mg(2+) is required as a cofactor. The cofactor is Mn(2+). Ca(2+) serves as cofactor.

It carries out the reaction ATP-dependent breakage, passage and rejoining of double-stranded DNA.. Its function is as follows. Topoisomerase IV is essential for chromosome segregation. It relaxes supercoiled DNA. Performs the decatenation events required during the replication of a circular DNA molecule. This chain is DNA topoisomerase 4 subunit B, found in Caulobacter vibrioides (strain ATCC 19089 / CIP 103742 / CB 15) (Caulobacter crescentus).